The primary structure comprises 221 residues: Max dimerization protein 1 (221 aa).

A Nuclear localization signal motif is present at residues 21 to 49 (RREREAEHGYASMLPYNSKERDGLKRKSK). Disordered stretches follow at residues 28–67 (HGYASMLPYNSKERDGLKRKSKSKKSSNSRSTHNEMEKNR) and 176–202 (DWSSSSSSVSDLDERGSMQSICSDEGY). Positions 55-107 (NSRSTHNEMEKNRRAHLRLCLEKLKILVPLGPESNRHTTLSLLTRAKSHIKKL) constitute a bHLH domain. The span at 192-202 (SMQSICSDEGY) shows a compositional bias: polar residues.

In terms of assembly, efficient DNA binding requires dimerization with another bHLH protein. Binds DNA as a heterodimer with MAX.

The protein resides in the nucleus. Its function is as follows. Transcriptional repressor. MAD binds with MAX to form a sequence-specific DNA-binding protein complex which recognizes the core sequence 5'-CAC[GA]TG-3'. MAD thus antagonizes MYC transcriptional activity by competing for MAX. The polypeptide is Max dimerization protein 1 (mxd1) (Xenopus tropicalis (Western clawed frog)).